The chain runs to 284 residues: 4-diphosphocytidyl-2-C-methyl-D-erythritol kinase (284 aa).

K14 is a catalytic residue. 97–107 contributes to the ATP binding site; it reads PMGGGVGGGSS. Residue D139 is part of the active site.

The protein belongs to the GHMP kinase family. IspE subfamily.

It catalyses the reaction 4-CDP-2-C-methyl-D-erythritol + ATP = 4-CDP-2-C-methyl-D-erythritol 2-phosphate + ADP + H(+). The protein operates within isoprenoid biosynthesis; isopentenyl diphosphate biosynthesis via DXP pathway; isopentenyl diphosphate from 1-deoxy-D-xylulose 5-phosphate: step 3/6. Catalyzes the phosphorylation of the position 2 hydroxy group of 4-diphosphocytidyl-2C-methyl-D-erythritol. The protein is 4-diphosphocytidyl-2-C-methyl-D-erythritol kinase of Pseudoalteromonas translucida (strain TAC 125).